A 449-amino-acid chain; its full sequence is Trigger factor (449 aa).

In terms of domain architecture, PPIase FKBP-type spans G172–P257.

It belongs to the FKBP-type PPIase family. Tig subfamily.

Its subcellular location is the cytoplasm. The catalysed reaction is [protein]-peptidylproline (omega=180) = [protein]-peptidylproline (omega=0). Functionally, involved in protein export. Acts as a chaperone by maintaining the newly synthesized protein in an open conformation. Functions as a peptidyl-prolyl cis-trans isomerase. This Ralstonia nicotianae (strain ATCC BAA-1114 / GMI1000) (Ralstonia solanacearum) protein is Trigger factor.